The chain runs to 289 residues: MSDRLAVLPQYLLPKQALTHFAGFVASRERGWVTTEIIRRFVAKYRVNMSEALDSDIASYLTFNDFFTRALKPGARPLAQAALVCPVDGAISQFGAIEHDQIFQAKGHHYSTTALVGGDAALAAHYQNGHFATIYLSPKDYHRIHMPCDGRLTRMIYVPGDLFSVNPVTARGVPGLFARNERVVCVFESARGPFVLALVGATIVGSMATVWHGVVNPPRGKAVREWRYPASGQPEVVLRQGEEMGRFLLGSTVVLLFPKGPLRFNPDWEPGRAVRLGEAMADVAADSQR.

Active-site charge relay system; for autoendoproteolytic cleavage activity residues include aspartate 88, histidine 145, and serine 251. Serine 251 (schiff-base intermediate with substrate; via pyruvic acid; for decarboxylase activity) is an active-site residue. Pyruvic acid (Ser); by autocatalysis is present on serine 251.

It belongs to the phosphatidylserine decarboxylase family. PSD-B subfamily. Prokaryotic type I sub-subfamily. As to quaternary structure, heterodimer of a large membrane-associated beta subunit and a small pyruvoyl-containing alpha subunit. Pyruvate is required as a cofactor. Is synthesized initially as an inactive proenzyme. Formation of the active enzyme involves a self-maturation process in which the active site pyruvoyl group is generated from an internal serine residue via an autocatalytic post-translational modification. Two non-identical subunits are generated from the proenzyme in this reaction, and the pyruvate is formed at the N-terminus of the alpha chain, which is derived from the carboxyl end of the proenzyme. The autoendoproteolytic cleavage occurs by a canonical serine protease mechanism, in which the side chain hydroxyl group of the serine supplies its oxygen atom to form the C-terminus of the beta chain, while the remainder of the serine residue undergoes an oxidative deamination to produce ammonia and the pyruvoyl prosthetic group on the alpha chain. During this reaction, the Ser that is part of the protease active site of the proenzyme becomes the pyruvoyl prosthetic group, which constitutes an essential element of the active site of the mature decarboxylase.

Its subcellular location is the cell membrane. The enzyme catalyses a 1,2-diacyl-sn-glycero-3-phospho-L-serine + H(+) = a 1,2-diacyl-sn-glycero-3-phosphoethanolamine + CO2. It functions in the pathway phospholipid metabolism; phosphatidylethanolamine biosynthesis; phosphatidylethanolamine from CDP-diacylglycerol: step 2/2. In terms of biological role, catalyzes the formation of phosphatidylethanolamine (PtdEtn) from phosphatidylserine (PtdSer). This is Phosphatidylserine decarboxylase proenzyme from Polaromonas naphthalenivorans (strain CJ2).